Here is a 68-residue protein sequence, read N- to C-terminus: Protein SlyX homolog (68 aa).

This sequence belongs to the SlyX family.

The protein is Protein SlyX homolog of Brucella abortus (strain S19).